Here is a 139-residue protein sequence, read N- to C-terminus: Nuclear transcription factor Y subunit B-4 (139 aa).

A DNA-binding region spans residues 8–14 (LPIANVG). Residues 35-46 (VQECATEFISFV) are subunit association domain (SAD). Residues 90–115 (YREAERERTEHNKGSNDSGNEKETNT) are compositionally biased toward basic and acidic residues. The tract at residues 90–139 (YREAERERTEHNKGSNDSGNEKETNTRSDVQNQSTKFIRVVEKGSSSSAR) is disordered. Residues 116–125 (RSDVQNQSTK) show a composition bias toward polar residues.

It belongs to the NFYB/HAP3 subunit family. As to quaternary structure, heterotrimeric transcription factor composed of three components, NF-YA, NF-YB and NF-YC. NF-YB and NF-YC must interact and dimerize for NF-YA association and DNA binding. In terms of tissue distribution, expressed in flowers, siliques and young rosettes.

The protein resides in the nucleus. Component of the NF-Y/HAP transcription factor complex. The NF-Y complex stimulates the transcription of various genes by recognizing and binding to a CCAAT motif in promoters. This is Nuclear transcription factor Y subunit B-4 (NFYB4) from Arabidopsis thaliana (Mouse-ear cress).